The chain runs to 473 residues: Photosystem II CP43 reaction center protein (473 aa).

The propeptide occupies 1 to 14 (MKTLYSLRRFYHVE). The residue at position 15 (Thr-15) is an N-acetylthreonine. At Thr-15 the chain carries Phosphothreonine. The next 5 helical transmembrane spans lie at 69 to 93 (LFEV…PHLA), 134 to 155 (LIGP…KDKN), 178 to 200 (KAVW…RKIT), 255 to 275 (KPFA…LSYS), and 291 to 312 (WFNN…ASQA). Glu-367 contributes to the [CaMn4O5] cluster binding site. A helical membrane pass occupies residues 447–471 (RARAAAAGFEKGIDRETEPVFFMNP).

The protein belongs to the PsbB/PsbC family. PsbC subfamily. PSII is composed of 1 copy each of membrane proteins PsbA, PsbB, PsbC, PsbD, PsbE, PsbF, PsbH, PsbI, PsbJ, PsbK, PsbL, PsbM, PsbT, PsbX, PsbY, PsbZ, Psb30/Ycf12, at least 3 peripheral proteins of the oxygen-evolving complex and a large number of cofactors. It forms dimeric complexes. The cofactor is Binds multiple chlorophylls and provides some of the ligands for the Ca-4Mn-5O cluster of the oxygen-evolving complex. It may also provide a ligand for a Cl- that is required for oxygen evolution. PSII binds additional chlorophylls, carotenoids and specific lipids..

Its subcellular location is the plastid. It localises to the chloroplast thylakoid membrane. One of the components of the core complex of photosystem II (PSII). It binds chlorophyll and helps catalyze the primary light-induced photochemical processes of PSII. PSII is a light-driven water:plastoquinone oxidoreductase, using light energy to abstract electrons from H(2)O, generating O(2) and a proton gradient subsequently used for ATP formation. The sequence is that of Photosystem II CP43 reaction center protein from Staurastrum punctulatum (Green alga).